The sequence spans 110 residues: UPF0122 protein spr1167 (110 aa).

This sequence belongs to the UPF0122 family.

Functionally, might take part in the signal recognition particle (SRP) pathway. This is inferred from the conservation of its genetic proximity to ftsY/ffh. May be a regulatory protein. This is UPF0122 protein spr1167 from Streptococcus pneumoniae (strain ATCC BAA-255 / R6).